The following is a 190-amino-acid chain: Class III hydrophobin F (190 aa).

The signal sequence occupies residues M1–A18. Cystine bridges form between C54–C115, C62–C109, C63–C97, and C116–C131.

This sequence belongs to the fungal hydrophobin family. As to quaternary structure, self-assembles to form functional amyloid fibrils called rodlets. Self-assembly into fibrillar rodlets occurs spontaneously at hydrophobic:hydrophilic interfaces and the rodlets further associate laterally to form amphipathic monolayers.

It localises to the secreted. The protein localises to the cell wall. Functionally, aerial growth, conidiation, and dispersal of filamentous fungi in the environment rely upon a capability of their secreting small amphipathic proteins called hydrophobins (HPBs) with low sequence identity. Class I can self-assemble into an outermost layer of rodlet bundles on aerial cell surfaces, conferring cellular hydrophobicity that supports fungal growth, development and dispersal; whereas Class II form highly ordered films at water-air interfaces through intermolecular interactions but contribute nothing to the rodlet structure. RodF and rodG belong to Class III, which contains hydrophobins with intermediate (between classes I and II) or atypical characteristics. RodF, unlike rodA, is not required for rodlet formation. This chain is Class III hydrophobin F, found in Aspergillus fumigatus (strain ATCC MYA-4609 / CBS 101355 / FGSC A1100 / Af293) (Neosartorya fumigata).